Reading from the N-terminus, the 122-residue chain is Large ribosomal subunit protein uL14c (122 aa).

Belongs to the universal ribosomal protein uL14 family. Part of the 50S ribosomal subunit.

It is found in the plastid. It localises to the chloroplast. Its function is as follows. Binds to 23S rRNA. The protein is Large ribosomal subunit protein uL14c of Welwitschia mirabilis (Tree tumbo).